The sequence spans 252 residues: Cell division protein ZapD (252 aa).

It belongs to the ZapD family. In terms of assembly, interacts with FtsZ.

The protein localises to the cytoplasm. In terms of biological role, cell division factor that enhances FtsZ-ring assembly. Directly interacts with FtsZ and promotes bundling of FtsZ protofilaments, with a reduction in FtsZ GTPase activity. The protein is Cell division protein ZapD of Cupriavidus pinatubonensis (strain JMP 134 / LMG 1197) (Cupriavidus necator (strain JMP 134)).